The chain runs to 174 residues: 3-hydroxydecanoyl-[acyl-carrier-protein] dehydratase (174 aa).

His73 is an active-site residue.

The protein belongs to the thioester dehydratase family. FabA subfamily. As to quaternary structure, homodimer.

It localises to the cytoplasm. It catalyses the reaction a (3R)-hydroxyacyl-[ACP] = a (2E)-enoyl-[ACP] + H2O. The catalysed reaction is (3R)-hydroxydecanoyl-[ACP] = (2E)-decenoyl-[ACP] + H2O. The enzyme catalyses (2E)-decenoyl-[ACP] = (3Z)-decenoyl-[ACP]. It functions in the pathway lipid metabolism; fatty acid biosynthesis. Functionally, necessary for the introduction of cis unsaturation into fatty acids. Catalyzes the dehydration of (3R)-3-hydroxydecanoyl-ACP to E-(2)-decenoyl-ACP and then its isomerization to Z-(3)-decenoyl-ACP. Can catalyze the dehydratase reaction for beta-hydroxyacyl-ACPs with saturated chain lengths up to 16:0, being most active on intermediate chain length. In Saccharophagus degradans (strain 2-40 / ATCC 43961 / DSM 17024), this protein is 3-hydroxydecanoyl-[acyl-carrier-protein] dehydratase.